Here is a 379-residue protein sequence, read N- to C-terminus: Caffeyl-CoA reductase-Etf complex subunit CarC (379 aa).

Residues 122-131 and 155-157 contribute to the FAD site; these read FALTEPGAGS and FIT. Substrate is bound at residue S131. Substrate is bound at residue 239-242; that stretch reads DVGR. Residues R267, Q278, and 335 to 339 contribute to the FAD site; that span reads QIHGG. E362 acts as the Proton acceptor in catalysis. G363 contacts substrate. 364–366 lines the FAD pocket; it reads TSQ.

It belongs to the acyl-CoA dehydrogenase family. In terms of assembly, part of the homotrimeric caffeyl-CoA reductase-Etf complex composed of (R)-2-hydroxyisocaproyl-CoA dehydratase CarC, and the electron transfer flavoprotein (ETF) alpha (CarE) and beta (CarD) subunits. The cofactor is FAD.

It is found in the cytoplasm. It carries out the reaction hydrocaffeoyl-CoA + 2 reduced [2Fe-2S]-[ferredoxin] + 2 NAD(+) = (E)-caffeoyl-CoA + 2 oxidized [2Fe-2S]-[ferredoxin] + 2 NADH. In terms of biological role, the Caffeyl-CoA reductase-Etf complex catalyzes the reduction of caffeyl-CoA to yield hydrocaffeyl-CoA. It couples the endergonic ferredoxin reduction with NADH as reductant to the exergonic reduction of caffeoyl-CoA with the same reductant. It uses the mechanism of electron bifurcation to overcome the steep energy barrier in ferredoxin reduction. Also reduces 4-coumaroyl-CoA and feruloyl-CoA. The polypeptide is Caffeyl-CoA reductase-Etf complex subunit CarC (Acetobacterium woodii (strain ATCC 29683 / DSM 1030 / JCM 2381 / KCTC 1655 / WB1)).